A 263-amino-acid chain; its full sequence is Phosphatidylglycerol--prolipoprotein diacylglyceryl transferase (263 aa).

Helical transmembrane passes span 16 to 36 (LAVS…WFYA), 55 to 75 (FVTY…ILLY), 92 to 112 (EGGM…YIFC), and 117 to 137 (LNFL…LFFG). Arg-138 is a binding site for a 1,2-diacyl-sn-glycero-3-phospho-(1'-sn-glycerol). The next 3 helical transmembrane spans lie at 172–192 (QLYE…YAVF), 201–221 (GLNS…IEIF), and 234–254 (SLTM…YLII).

It belongs to the Lgt family.

Its subcellular location is the cell inner membrane. The enzyme catalyses L-cysteinyl-[prolipoprotein] + a 1,2-diacyl-sn-glycero-3-phospho-(1'-sn-glycerol) = an S-1,2-diacyl-sn-glyceryl-L-cysteinyl-[prolipoprotein] + sn-glycerol 1-phosphate + H(+). The protein operates within protein modification; lipoprotein biosynthesis (diacylglyceryl transfer). Catalyzes the transfer of the diacylglyceryl group from phosphatidylglycerol to the sulfhydryl group of the N-terminal cysteine of a prolipoprotein, the first step in the formation of mature lipoproteins. This is Phosphatidylglycerol--prolipoprotein diacylglyceryl transferase from Rickettsia bellii (strain OSU 85-389).